The following is a 246-amino-acid chain: Chanoclavine-I dehydrogenase easD (246 aa).

A signal peptide spans 1 to 20 (MASVSSKIFAITGGASGIGA). Residues Ile-18, Asp-66, Arg-132, Tyr-169, and Lys-173 each coordinate NADP(+). The active-site Proton donor is the Tyr-169. Residue Lys-173 is the Lowers pKa of active site Tyr of the active site.

It belongs to the short-chain dehydrogenases/reductases (SDR) family. Homotetramer.

It catalyses the reaction chanoclavine-I + NAD(+) = chanoclavine-I aldehyde + NADH + H(+). It participates in alkaloid biosynthesis; ergot alkaloid biosynthesis. Its function is as follows. Chanoclavine-I dehydrogenase; part of the gene cluster that mediates the biosynthesis of fungal ergot alkaloid. DmaW catalyzes the first step of ergot alkaloid biosynthesis by condensing dimethylallyl diphosphate (DMAP) and tryptophan to form 4-dimethylallyl-L-tryptophan. The second step is catalyzed by the methyltransferase easF that methylates 4-dimethylallyl-L-tryptophan in the presence of S-adenosyl-L-methionine, resulting in the formation of 4-dimethylallyl-L-abrine. The catalase easC and the FAD-dependent oxidoreductase easE then transform 4-dimethylallyl-L-abrine to chanoclavine-I which is further oxidized by easD in the presence of NAD(+), resulting in the formation of chanoclavine-I aldehyde. Chanoclavine-I aldehyde is the precursor of ergoamides and ergopeptines in Clavicipitaceae, and clavine-type alcaloids such as fumiclavine in Trichocomaceae. However, the metabolites downstream of chanoclavine-I aldehyde in Arthrodermataceae have not been identified yet. The protein is Chanoclavine-I dehydrogenase easD of Arthroderma benhamiae (strain ATCC MYA-4681 / CBS 112371) (Trichophyton mentagrophytes).